A 547-amino-acid chain; its full sequence is Chaperonin GroEL 1 (547 aa).

ATP-binding positions include 30–33, Lys-51, 87–91, Gly-415, and Asp-495; these read TLGP and DGTTT.

The protein belongs to the chaperonin (HSP60) family. In terms of assembly, forms a cylinder of 14 subunits composed of two heptameric rings stacked back-to-back. Interacts with the co-chaperonin GroES.

Its subcellular location is the cytoplasm. It catalyses the reaction ATP + H2O + a folded polypeptide = ADP + phosphate + an unfolded polypeptide.. Its function is as follows. Together with its co-chaperonin GroES, plays an essential role in assisting protein folding. The GroEL-GroES system forms a nano-cage that allows encapsulation of the non-native substrate proteins and provides a physical environment optimized to promote and accelerate protein folding. The sequence is that of Chaperonin GroEL 1 from Rhizobium johnstonii (strain DSM 114642 / LMG 32736 / 3841) (Rhizobium leguminosarum bv. viciae).